Here is a 263-residue protein sequence, read N- to C-terminus: Phosphatidylglycerol--prolipoprotein diacylglyceryl transferase (263 aa).

4 consecutive transmembrane segments (helical) span residues 16-36 (LAVSWYSLSYVVGILFGWFYA), 55-75 (FVTYAIIGIIVGGRLGYILLY), 92-112 (EGGMSFHGGAIGVIIAAYIFC), and 117-137 (LNFLSLTDIIAPVVPIGLFFG). Arg-138 contributes to the a 1,2-diacyl-sn-glycero-3-phospho-(1'-sn-glycerol) binding site. The next 3 helical transmembrane spans lie at 172 to 192 (QLYEAFFEGLVLFCILAYAVF), 201 to 221 (GLNSGLFLMFYSLFRIIIEIF), and 234 to 254 (SLTMGQILSMPLLLLGIYLII).

This sequence belongs to the Lgt family.

It is found in the cell inner membrane. The enzyme catalyses L-cysteinyl-[prolipoprotein] + a 1,2-diacyl-sn-glycero-3-phospho-(1'-sn-glycerol) = an S-1,2-diacyl-sn-glyceryl-L-cysteinyl-[prolipoprotein] + sn-glycerol 1-phosphate + H(+). It functions in the pathway protein modification; lipoprotein biosynthesis (diacylglyceryl transfer). Catalyzes the transfer of the diacylglyceryl group from phosphatidylglycerol to the sulfhydryl group of the N-terminal cysteine of a prolipoprotein, the first step in the formation of mature lipoproteins. The polypeptide is Phosphatidylglycerol--prolipoprotein diacylglyceryl transferase (Rickettsia bellii (strain OSU 85-389)).